Reading from the N-terminus, the 1318-residue chain is DNA-directed RNA polymerase subunit beta' (1318 aa).

Positions 60, 62, 75, and 78 each coordinate Zn(2+). Asp535, Asp537, and Asp539 together coordinate Mg(2+). Zn(2+)-binding residues include Cys890, Cys967, Cys974, and Cys977.

This sequence belongs to the RNA polymerase beta' chain family. As to quaternary structure, the RNAP catalytic core consists of 2 alpha, 1 beta, 1 beta' and 1 omega subunit. When a sigma factor is associated with the core the holoenzyme is formed, which can initiate transcription. Mg(2+) serves as cofactor. The cofactor is Zn(2+).

It carries out the reaction RNA(n) + a ribonucleoside 5'-triphosphate = RNA(n+1) + diphosphate. DNA-dependent RNA polymerase catalyzes the transcription of DNA into RNA using the four ribonucleoside triphosphates as substrates. In Rhodococcus jostii (strain RHA1), this protein is DNA-directed RNA polymerase subunit beta'.